We begin with the raw amino-acid sequence, 474 residues long: MECHYSEAQLASLLLPYLERFDENAINGLASELKSHGISVYAAAGFDPNVGSSLTFKKEVPPSDTSILEDVDHVNLYSEQDNFHLSMLDMMDFHTPDIMDIGLFTDVQHEGDPVDELELSSDTRSSLSPSSHNTTTGHETGLSSVTPPQSYWTSDNLVSTRALPTTGDKQLSPQRRTEIADISSLPTCQQISLEPQCHSVMEAPCHGKEVTKRNKRSRTEAQEASNSPCASSTADSQTNPAPLRLRSVFGPGTKYNLSHKSLHEISDISENCIRPDLVEFLEERLTRWKKTGFWHQDQIPEPTASGAGREKLIDAYSCICRLESRMKDDQILNRVAVVMLHTAYEQACQEWRHAGTHQRKGRGRGDATTVIDEILSELHEDWDVGDRKRYHRSRFHDKKRFGKRWLVLIKSLGVGILLCSSQRLASAVYVLPFQITLFILDTNLSESAATRRFLPATCCRRWFAVSNSLRLNSC.

Disordered stretches follow at residues 114–153 and 207–242; these read VDEL…SYWT and GKEV…NPAP. Over residues 120 to 131 the composition is skewed to low complexity; that stretch reads SSDTRSSLSPSS. Positions 132–153 are enriched in polar residues; the sequence is HNTTTGHETGLSSVTPPQSYWT. Residues 207-221 are compositionally biased toward basic and acidic residues; the sequence is GKEVTKRNKRSRTEA. Over residues 222–240 the composition is skewed to polar residues; that stretch reads QEASNSPCASSTADSQTNP.

It belongs to the POU transcription factor family. Class-3 subfamily.

It localises to the nucleus. Functionally, transcription factor; part of the fragmented gene cluster that mediates the biosynthesis of fusarochromene, a tryptophan-derived metabolite closely related to a group of mycotoxins including fusarochromanone. The chain is Transcription factor fscB from Fusarium equiseti (Fusarium scirpi).